A 505-amino-acid chain; its full sequence is Maturase K (505 aa).

This sequence belongs to the intron maturase 2 family. MatK subfamily.

The protein resides in the plastid. The protein localises to the chloroplast. In terms of biological role, usually encoded in the trnK tRNA gene intron. Probably assists in splicing its own and other chloroplast group II introns. This Amaranthus greggii (Gregg's amaranth) protein is Maturase K.